A 269-amino-acid chain; its full sequence is 4-hydroxy-tetrahydrodipicolinate reductase (269 aa).

Residues 11–16 and glutamate 37 contribute to the NAD(+) site; that span reads GASGRM. Arginine 38 provides a ligand contact to NADP(+). Residues 101 to 103 and 125 to 128 contribute to the NAD(+) site; these read GTT and AGNM. Catalysis depends on histidine 158, which acts as the Proton donor/acceptor. Histidine 159 lines the (S)-2,3,4,5-tetrahydrodipicolinate pocket. Catalysis depends on lysine 162, which acts as the Proton donor. 168–169 is a (S)-2,3,4,5-tetrahydrodipicolinate binding site; the sequence is GT.

It belongs to the DapB family.

Its subcellular location is the cytoplasm. It carries out the reaction (S)-2,3,4,5-tetrahydrodipicolinate + NAD(+) + H2O = (2S,4S)-4-hydroxy-2,3,4,5-tetrahydrodipicolinate + NADH + H(+). The catalysed reaction is (S)-2,3,4,5-tetrahydrodipicolinate + NADP(+) + H2O = (2S,4S)-4-hydroxy-2,3,4,5-tetrahydrodipicolinate + NADPH + H(+). It functions in the pathway amino-acid biosynthesis; L-lysine biosynthesis via DAP pathway; (S)-tetrahydrodipicolinate from L-aspartate: step 4/4. Functionally, catalyzes the conversion of 4-hydroxy-tetrahydrodipicolinate (HTPA) to tetrahydrodipicolinate. The polypeptide is 4-hydroxy-tetrahydrodipicolinate reductase (Cereibacter sphaeroides (strain KD131 / KCTC 12085) (Rhodobacter sphaeroides)).